The sequence spans 127 residues: Thioredoxin domain-containing protein 8 (127 aa).

Residues 2-127 (VKRIKNMSEL…QLEKKIQELM (126 aa)) form the Thioredoxin domain. Cys32 and Cys35 are oxidised to a cystine.

Belongs to the thioredoxin family. In terms of tissue distribution, testis-specific. Only expressed during spermiogenesis, prominently in the Golgi apparatus of pachytene spermatocytes and round and elongated spermatids, with a transient localization in the developing acrosome of round spermatids (at protein level).

The protein localises to the cytoplasm. It is found in the golgi apparatus. In terms of biological role, may be required for post-translational modifications of proteins required for acrosomal biogenesis. May act by reducing disulfide bonds within the sperm. This Mus musculus (Mouse) protein is Thioredoxin domain-containing protein 8 (Txndc8).